Consider the following 78-residue polypeptide: CDC42 small effector protein 1 (78 aa).

Residues Cys-10 and Cys-11 are each lipidated (S-palmitoyl cysteine). Positions 30-43 constitute a CRIB domain; it reads IGEPMNFVHLTHIG.

Belongs to the CDC42SE/SPEC family.

It localises to the cytoplasm. The protein localises to the cytoskeleton. The protein resides in the cell membrane. Its function is as follows. Probably involved in the organization of the actin cytoskeleton by acting downstream of CDC42, inducing actin filament assembly. In Gallus gallus (Chicken), this protein is CDC42 small effector protein 1 (CDC42SE1).